Here is a 204-residue protein sequence, read N- to C-terminus: Proteasome subunit beta 1 (204 aa).

A propeptide spans Met-1–Ala-9 (removed in mature form; by autocatalysis). The active-site Nucleophile is the Thr-10.

The protein belongs to the peptidase T1B family. In terms of assembly, the 20S proteasome core is composed of 14 alpha and 14 beta subunits that assemble into four stacked heptameric rings, resulting in a barrel-shaped structure. The two inner rings, each composed of seven catalytic beta subunits, are sandwiched by two outer rings, each composed of seven alpha subunits. The catalytic chamber with the active sites is on the inside of the barrel. Has a gated structure, the ends of the cylinder being occluded by the N-termini of the alpha-subunits. Is capped at one or both ends by the proteasome regulatory ATPase, PAN.

The protein resides in the cytoplasm. It catalyses the reaction Cleavage of peptide bonds with very broad specificity.. The formation of the proteasomal ATPase PAN-20S proteasome complex, via the docking of the C-termini of PAN into the intersubunit pockets in the alpha-rings, triggers opening of the gate for substrate entry. Interconversion between the open-gate and close-gate conformations leads to a dynamic regulation of the 20S proteasome proteolysis activity. Its function is as follows. Component of the proteasome core, a large protease complex with broad specificity involved in protein degradation. The protein is Proteasome subunit beta 1 of Hyperthermus butylicus (strain DSM 5456 / JCM 9403 / PLM1-5).